The following is a 455-amino-acid chain: ATP-dependent protease ATPase subunit HslU (455 aa).

Residues I19 and 61-66 each bind ATP; that span reads GVGKTE. The tract at residues 144 to 163 is disordered; the sequence is ESKVGFANEPAEDAASKKEK. Residues D268, E333, and R405 each contribute to the ATP site.

This sequence belongs to the ClpX chaperone family. HslU subfamily. A double ring-shaped homohexamer of HslV is capped on each side by a ring-shaped HslU homohexamer. The assembly of the HslU/HslV complex is dependent on binding of ATP.

The protein localises to the cytoplasm. In terms of biological role, ATPase subunit of a proteasome-like degradation complex; this subunit has chaperone activity. The binding of ATP and its subsequent hydrolysis by HslU are essential for unfolding of protein substrates subsequently hydrolyzed by HslV. HslU recognizes the N-terminal part of its protein substrates and unfolds these before they are guided to HslV for hydrolysis. The chain is ATP-dependent protease ATPase subunit HslU from Francisella tularensis subsp. novicida (strain U112).